The sequence spans 157 residues: Ribonuclease (157 aa).

An N-terminal signal peptide occupies residues 1 to 34 (MMKMEGIALKKRLSWISVCLLVLVSAAGMLFSTA). A propeptide spanning residues 35–47 (AKTETSSHKAHTE) is cleaved from the precursor. The active-site Proton acceptor is E120. H149 acts as the Proton donor in catalysis.

This sequence belongs to the ribonuclease N1/T1 family.

The protein localises to the secreted. In terms of biological role, hydrolyzes phosphodiester bonds in RNA, poly- and oligoribonucleotides resulting in 3'-nucleoside monophosphates via 2',3'-cyclophosphate intermediates. The protein is Ribonuclease of Bacillus amyloliquefaciens (Bacillus velezensis).